The following is a 495-amino-acid chain: Solute carrier family 2, facilitated glucose transporter member 3 (495 aa).

The Cytoplasmic portion of the chain corresponds to 1 to 10 (MGTQKVTVSL). Residues 11–32 (IFALSIATIGSFQFGYNTGVIN) traverse the membrane as a helical segment. Residues 33-64 (APETIIKDFLNYTLEEKSENLPTEVLLTSLWS) lie on the Extracellular side of the membrane. Asparagine 43 is a glycosylation site (N-linked (GlcNAc...) asparagine). The helical transmembrane segment at 65–85 (LSVAIFSVGGMIGSFSVGLFV) threads the bilayer. Residues 86 to 90 (NRFGR) are Cytoplasmic-facing. Residues 91–111 (RNSMLMVNLLAVAGGCLMGFC) traverse the membrane as a helical segment. The Extracellular segment spans residues 112–118 (KIAQSVE). The helical transmembrane segment at 119-142 (MLILGRLIIGLFCGLCTGFVPMYI) threads the bilayer. The Cytoplasmic segment spans residues 143-153 (GEISPTALRGA). The helical transmembrane segment at 154-174 (FGTLNQLGIVIGILVAQIFGL) threads the bilayer. Position 159 (glutamine 159) interacts with D-glucose. Residues 175–183 (KVIMGTEEL) are Extracellular-facing. The chain crosses the membrane as a helical span at residues 184–204 (WPLLLGFTIIPAVLQSAALPF). Residues 205-269 (CPESPRFLLI…LFRSRSYRQP (65 aa)) lie on the Cytoplasmic side of the membrane. Threonine 232 is modified (phosphothreonine). The chain crosses the membrane as a helical span at residues 270–290 (IIISIMLQLSQQLSGINAVFY). Residues 277 to 279 (QLS) are important for selectivity against fructose. Residues 280–281 (QQ) and asparagine 286 contribute to the D-glucose site. The Extracellular segment spans residues 291-304 (YSTGIFKDAGVEEP). The chain crosses the membrane as a helical span at residues 305 to 325 (IYATIGAGVVNTIFTVVSLFL). Asparagine 315 is a binding site for D-glucose. The Cytoplasmic segment spans residues 326–331 (VERAGR). Residues 332-352 (RTLHMIGLGGMAVCSILMTIS) traverse the membrane as a helical segment. Residues 353–363 (LLLKDNYNWMS) are Extracellular-facing. Residues 364–389 (FVCIGAILVFVAFFEIGPGPIPWFIV) traverse the membrane as a helical segment. Residues glutamate 378 and tryptophan 386 each coordinate D-glucose. Over 390 to 399 (AELFSQGPRP) the chain is Cytoplasmic. A helical transmembrane segment spans residues 400 to 420 (AAMAVAGCSNWTSNFLVGLLF). The Extracellular portion of the chain corresponds to 421–429 (PSAAFYLGA). Residues 430-450 (YVFIIFTGFLIVFLVFTFFKV) form a helical membrane-spanning segment. At 451 to 495 (PETRGRTFEEITRAFEGQGQDANRAEKGPIVEMNSMQPVKETATV) the chain is on the cytoplasmic side. Position 485 is a phosphoserine (serine 485). Residue threonine 492 is modified to Phosphothreonine.

Belongs to the major facilitator superfamily. Sugar transporter (TC 2.A.1.1) family. Glucose transporter subfamily. Interacts with SMIM43; the interaction may promote SLC2A3-mediated glucose transport to meet the energy needs of mesendoderm differentiation.

The protein resides in the cell membrane. It localises to the perikaryon. Its subcellular location is the cell projection. It carries out the reaction D-glucose(out) = D-glucose(in). The catalysed reaction is D-galactose(in) = D-galactose(out). Its activity is regulated as follows. Deoxyglucose transport is inhibited by D-glucose, D-galactose and maltose. Galactose transport is inhibited by D-glucose and maltose. Facilitative glucose transporter. Can also mediate the uptake of various other monosaccharides across the cell membrane. Mediates the uptake of glucose, 2-deoxyglucose, galactose, mannose, xylose and fucose, and probably also dehydroascorbate. Does not mediate fructose transport. Required for mesendoderm differentiation. In Canis lupus familiaris (Dog), this protein is Solute carrier family 2, facilitated glucose transporter member 3.